Reading from the N-terminus, the 351-residue chain is Protein FAM118B (351 aa).

Residue Ala2 is modified to N-acetylalanine. A Phosphoserine modification is found at Ser9.

This sequence belongs to the FAM118 family.

The protein localises to the nucleus. The protein resides in the cajal body. Functionally, may play a role in Cajal bodies formation. In Bos taurus (Bovine), this protein is Protein FAM118B (FAM118B).